A 291-amino-acid chain; its full sequence is Translocon-associated protein subunit alpha (291 aa).

The signal sequence occupies residues 1 to 20; it reads MRLLPRLLLLLLLVFPATVL. The Lumenal portion of the chain corresponds to 21-207; the sequence is FRGGPRGSLA…EREDGLDGET (187 aa). The segment at 34–83 is disordered; that stretch reads DLTEDEETVEDSIIEDEDDEAEVEEDEPTDLVEDKEEEDVSGEPEASPSA. Acidic residues predominate over residues 35–75; the sequence is LTEDEETVEDSIIEDEDDEAEVEEDEPTDLVEDKEEEDVSG. N-linked (GlcNAc...) asparagine glycosylation is found at N136 and N191. A helical transmembrane segment spans residues 208–228; the sequence is IFMYMFLAGLGLLVIVGLHQL. At 229–291 the chain is on the cytoplasmic side; it reads LESRKRKRPV…AQKRSVGSDE (63 aa). Residue S247 is modified to Phosphoserine. A Phosphothreonine modification is found at T260. Residues 263-291 are disordered; sequence QIMQSRRDKASPRRLPRKRAQKRSVGSDE. The residue at position 273 (S273) is a Phosphoserine. The span at 274–284 shows a compositional bias: basic residues; that stretch reads PRRLPRKRAQK.

It belongs to the TRAP-alpha family. Heterotetramer of TRAP-alpha, TRAP-beta, TRAP-delta and TRAP-gamma. Interacts with palmitoylated calnexin (CALX), the interaction is required for efficient folding of glycosylated proteins. Phosphorylated in its cytoplasmic tail.

It is found in the endoplasmic reticulum membrane. In terms of biological role, TRAP proteins are part of a complex whose function is to bind calcium to the ER membrane and thereby regulate the retention of ER resident proteins. May be involved in the recycling of the translocation apparatus after completion of the translocation process or may function as a membrane-bound chaperone facilitating folding of translocated proteins. In Pongo abelii (Sumatran orangutan), this protein is Translocon-associated protein subunit alpha (SSR1).